The following is a 298-amino-acid chain: UDP-N-acetylenolpyruvoylglucosamine reductase (298 aa).

Residues 26–191 enclose the FAD-binding PCMH-type domain; sequence KTGGPADWLA…LDATFALEPG (166 aa). R170 is an active-site residue. S220 functions as the Proton donor in the catalytic mechanism. E290 is an active-site residue.

Belongs to the MurB family. The cofactor is FAD.

Its subcellular location is the cytoplasm. It carries out the reaction UDP-N-acetyl-alpha-D-muramate + NADP(+) = UDP-N-acetyl-3-O-(1-carboxyvinyl)-alpha-D-glucosamine + NADPH + H(+). The protein operates within cell wall biogenesis; peptidoglycan biosynthesis. Cell wall formation. In Limosilactobacillus reuteri subsp. reuteri (strain JCM 1112) (Lactobacillus reuteri), this protein is UDP-N-acetylenolpyruvoylglucosamine reductase.